The chain runs to 130 residues: MAENQYYGTGRRKSSTARVFIKAGSGKIVINQRSLEQYFGRPTARMVVRQPLELVEMTEKLDLYITVNGGGISGQAGAIRHGITRALMQYDETLRSELRKAGFVTRDARKVERKKVGLHKARKRPQYSKR.

Belongs to the universal ribosomal protein uS9 family.

The chain is Small ribosomal subunit protein uS9 from Aeromonas hydrophila subsp. hydrophila (strain ATCC 7966 / DSM 30187 / BCRC 13018 / CCUG 14551 / JCM 1027 / KCTC 2358 / NCIMB 9240 / NCTC 8049).